The chain runs to 140 residues: ATP synthase epsilon chain (140 aa).

The protein belongs to the ATPase epsilon chain family. As to quaternary structure, F-type ATPases have 2 components, CF(1) - the catalytic core - and CF(0) - the membrane proton channel. CF(1) has five subunits: alpha(3), beta(3), gamma(1), delta(1), epsilon(1). CF(0) has three main subunits: a, b and c.

It is found in the cell inner membrane. Produces ATP from ADP in the presence of a proton gradient across the membrane. The sequence is that of ATP synthase epsilon chain from Bdellovibrio bacteriovorus (strain ATCC 15356 / DSM 50701 / NCIMB 9529 / HD100).